The chain runs to 83 residues: Toxin CjTL8 (83 aa).

An N-terminal signal peptide occupies residues 1–20; that stretch reads MSSAIKILALLMVLVALAQA. Residues 21–44 constitute a propeptide that is removed on maturation; it reads KPRKDYRAYPDFDDKSVILEDDKR. Residue Phe-81 is modified to Phenylalanine amide.

In terms of processing, contains 3 disulfide bonds.

Its subcellular location is the secreted. The protein localises to the nematocyst. Its function is as follows. In vivo, induces immediate paralysis on shrimps (C.multidentata), followed by death when high doses are injected. No activity is observed when injected into fly larvae (M.domestica). The sequence is that of Toxin CjTL8 from Epiactis japonica (Sea anemone).